Reading from the N-terminus, the 289-residue chain is EGAEQDGSERTDGGRPIWNIAHMVNNKQAIDKYLDKGANSVESDVSFDSDGKPEKMLHGIPCDCGRKCLNQMSFTDYLDYMRQLTTPGDPKFRENLILIMLDLKLKSVAANLAYSSGQEVALQMLNTYWKRGESGARAYIVLSIPTIKRVTFVRGFYDKLHSEGFDQYREKVGVDFSGNEDLDETGRILSSQNILDHIWQSDGITNCIFRVMTRLKKAINKRDSNGYMVKVYYWSVDKYTIMRKTLRAGADGMITNFPDRLVSVLNEREFSGKFRLATYDDNPWERYKA.

Residues 1–2 (EG) form the signal peptide. The propeptide occupies 3-11 (AEQDGSERT). The active site involves H22. Mg(2+)-binding residues include E42 and D44. The Nucleophile role is filled by H58. Disulfide bonds link C62–C68 and C64–C207. D102 is a binding site for Mg(2+).

This sequence belongs to the arthropod phospholipase D family. Class II subfamily. The cofactor is Mg(2+). Expressed by the venom gland.

The protein localises to the secreted. It catalyses the reaction an N-(acyl)-sphingosylphosphocholine = an N-(acyl)-sphingosyl-1,3-cyclic phosphate + choline. The catalysed reaction is N-hexanoyl-sphing-4-enine-1-phosphocholine = N-(hexanoyl)-sphing-4-enine-1,3-cyclic phosphate + choline. It carries out the reaction N-(dodecanoyl)-sphing-4-enine-1-phosphocholine = N-dodecanoyl-sphing-4-enine-1,3-cyclic phosphate + choline. The enzyme catalyses an N-(acyl)-sphingosylphosphoethanolamine = an N-(acyl)-sphingosyl-1,3-cyclic phosphate + ethanolamine. It catalyses the reaction N-dodecanoyl-heptadecasphing-4-enine-1-phosphoethanolamine = N-dodecanoyl-heptadecasphing-4-enine-1,3-cyclic phosphate + ethanolamine. The catalysed reaction is a 1-acyl-sn-glycero-3-phosphocholine = a 1-acyl-sn-glycero-2,3-cyclic phosphate + choline. It carries out the reaction 1-tetradecanoyl-sn-glycero-3-phosphocholine = 1-tetradecanoyl-sn-glycero-2,3-cyclic phosphate + choline. The enzyme catalyses 1-octanoyl-sn-glycero-3-phosphocholine = 1-octanoyl-sn-glycero-2,3-cyclic phosphate + choline. It catalyses the reaction a 1-acyl-sn-glycero-3-phosphoethanolamine = a 1-acyl-sn-glycero-2,3-cyclic phosphate + ethanolamine. The catalysed reaction is 1-tetradecanoyl-sn-glycero-3-phosphoethanolamine = 1-tetradecanoyl-sn-glycero-2,3-cyclic phosphate + ethanolamine. Functionally, dermonecrotic toxins cleave the phosphodiester linkage between the phosphate and headgroup of certain phospholipids (sphingolipid and lysolipid substrates), forming an alcohol (often choline) and a cyclic phosphate. This toxin acts on sphingomyelin (SM) and on ceramide phosphoethanolamine (CPE) with high activity. It also acts on lysophosphatidylcholine (LPC) and on lysophosphatidylethanolamine (LPE) with moderate activity. It is not active on lysophosphatidylserine (LPS), and lysophosphatidylglycerol (LPG). It acts by transphosphatidylation, releasing exclusively cyclic phosphate as second products. It is not surprising that spider toxins have affinity for ethanolamine-containing sphingolipids since they are common in insect prey. On mammals, induces dermonecrosis, hemolysis, increased vascular permeability, edema, inflammatory response, and platelet aggregation. The chain is Dermonecrotic toxin LarSicTox-betaID1 from Loxosceles arizonica (Arizona brown spider).